The chain runs to 168 residues: Small ribosomal subunit protein uS9 (168 aa).

Positions 1 to 38 (MAKIADSIDSAQADSVENVESYSTETPESAAPAAPRPV) are disordered. Positions 9–22 (DSAQADSVENVESY) are enriched in polar residues. Positions 23 to 37 (STETPESAAPAAPRP) are enriched in low complexity.

It belongs to the universal ribosomal protein uS9 family.

This Leifsonia xyli subsp. xyli (strain CTCB07) protein is Small ribosomal subunit protein uS9.